A 663-amino-acid chain; its full sequence is Oligopeptide-binding protein SarA (663 aa).

Residues 1 to 22 form the signal peptide; it reads MKKGKILALAGVALLATGVLAA. Cys-23 is lipidated: N-palmitoyl cysteine. A lipid anchor (S-diacylglycerol cysteine) is attached at Cys-23. The tract at residues 637-663 is disordered; sequence QKAQEKWNKERAESNKKAQEELEKHVK.

Belongs to the bacterial solute-binding protein 5 family.

The protein resides in the cell membrane. Its function is as follows. May be involved in the expression of cell surface properties important for colonization of the human oral cavity. It may also be involved in uptake processes. The polypeptide is Oligopeptide-binding protein SarA (sarA) (Streptococcus gordonii (strain Challis / ATCC 35105 / BCRC 15272 / CH1 / DL1 / V288)).